The following is a 364-amino-acid chain: MRLSDFHYELPPELIAQRPLAERSASRLLCLDRDTGALADRRFRDLPDLLNPGDLLVFNDTRVIPARLLGVKRDTGGRVEVLVERVLDEHRVLAHVRASKSPGEGVVLWLEEALEAVVEGREGDLFCLWFAGDLPVIELLERHGHMPLPPYIERPDAAEDRDRYQTVFASRPGAVAAPTAGLHFDADIMARMRARGVETAAVTLHVGAGTFQPVRVEDVSRHVMHAEWTEVSTQVCDQVAACRARGGRVVAVGTTAVRSLESAAADGELKPFSGDTRLFITPGYTFRVVDALVTNFHLPESTLLMLVSAFAGYEPVMQAYRHAVAERYRFFSYGDAMFIGPQEASDKMQETSGRGERPRFDHEI.

Positions 344-364 (ASDKMQETSGRGERPRFDHEI) are disordered.

Belongs to the QueA family. In terms of assembly, monomer.

It localises to the cytoplasm. It carries out the reaction 7-aminomethyl-7-carbaguanosine(34) in tRNA + S-adenosyl-L-methionine = epoxyqueuosine(34) in tRNA + adenine + L-methionine + 2 H(+). It participates in tRNA modification; tRNA-queuosine biosynthesis. In terms of biological role, transfers and isomerizes the ribose moiety from AdoMet to the 7-aminomethyl group of 7-deazaguanine (preQ1-tRNA) to give epoxyqueuosine (oQ-tRNA). This chain is S-adenosylmethionine:tRNA ribosyltransferase-isomerase, found in Thioalkalivibrio sulfidiphilus (strain HL-EbGR7).